We begin with the raw amino-acid sequence, 1022 residues long: Probable beta-galactosidase B (1022 aa).

The signal sequence occupies residues Met-1–Ala-20. N-linked (GlcNAc...) asparagine glycosylation is present at Asn-23. Tyr-90 serves as a coordination point for substrate. A glycan (N-linked (GlcNAc...) asparagine) is linked at Asn-100. Substrate-binding residues include Asn-135, Ala-136, Glu-137, and Asn-195. Glu-196 functions as the Proton donor in the catalytic mechanism. Asn-211 carries N-linked (GlcNAc...) asparagine glycosylation. Residue Tyr-265 coordinates substrate. Cys-271 and Cys-324 form a disulfide bridge. The active-site Nucleophile is Glu-308. Substrate is bound at residue Tyr-373. Residues Asn-411, Asn-456, Asn-541, Asn-554, Asn-626, Asn-777, Asn-790, Asn-832, Asn-880, and Asn-881 are each glycosylated (N-linked (GlcNAc...) asparagine).

It belongs to the glycosyl hydrolase 35 family.

It localises to the secreted. The enzyme catalyses Hydrolysis of terminal non-reducing beta-D-galactose residues in beta-D-galactosides.. In terms of biological role, cleaves beta-linked terminal galactosyl residues from gangliosides, glycoproteins, and glycosaminoglycans. The sequence is that of Probable beta-galactosidase B (lacB) from Aspergillus terreus (strain NIH 2624 / FGSC A1156).